The following is a 291-amino-acid chain: Lys-63-specific deubiquitinase BRCC36-like (291 aa).

The MPN domain occupies 12-179; it reads VYLESDAFLV…YTCFQSVQAS (168 aa). Residues His122, His124, and Asp135 each contribute to the Zn(2+) site. The short motif at 122-135 is the JAMM motif element; the sequence is HSHPHITVWPSHVD. Residues 259-286 adopt a coiled-coil conformation; the sequence is LQWLEDRLEQNQQRLQELEQEKEDLMEE.

This sequence belongs to the peptidase M67A family. BRCC36 subfamily.

Its function is as follows. Metalloprotease that specifically cleaves 'Lys-63'-linked polyubiquitin chains. In Mus musculus (Mouse), this protein is Lys-63-specific deubiquitinase BRCC36-like.